The sequence spans 72 residues: Translation initiation factor IF-1 (72 aa).

Positions 1–72 (MSKEELLEFP…TKGRITYRFK (72 aa)) constitute an S1-like domain.

The protein belongs to the IF-1 family. As to quaternary structure, component of the 30S ribosomal translation pre-initiation complex which assembles on the 30S ribosome in the order IF-2 and IF-3, IF-1 and N-formylmethionyl-tRNA(fMet); mRNA recruitment can occur at any time during PIC assembly.

It localises to the cytoplasm. Its function is as follows. One of the essential components for the initiation of protein synthesis. Stabilizes the binding of IF-2 and IF-3 on the 30S subunit to which N-formylmethionyl-tRNA(fMet) subsequently binds. Helps modulate mRNA selection, yielding the 30S pre-initiation complex (PIC). Upon addition of the 50S ribosomal subunit IF-1, IF-2 and IF-3 are released leaving the mature 70S translation initiation complex. The polypeptide is Translation initiation factor IF-1 (Parvibaculum lavamentivorans (strain DS-1 / DSM 13023 / NCIMB 13966)).